The chain runs to 473 residues: ATP synthase subunit beta (473 aa).

Residue 153 to 160 (GGAGVGKT) participates in ATP binding.

This sequence belongs to the ATPase alpha/beta chains family. F-type ATPases have 2 components, CF(1) - the catalytic core - and CF(0) - the membrane proton channel. CF(1) has five subunits: alpha(3), beta(3), gamma(1), delta(1), epsilon(1). CF(0) has three main subunits: a(1), b(2) and c(9-12). The alpha and beta chains form an alternating ring which encloses part of the gamma chain. CF(1) is attached to CF(0) by a central stalk formed by the gamma and epsilon chains, while a peripheral stalk is formed by the delta and b chains.

It localises to the cell inner membrane. The catalysed reaction is ATP + H2O + 4 H(+)(in) = ADP + phosphate + 5 H(+)(out). Produces ATP from ADP in the presence of a proton gradient across the membrane. The catalytic sites are hosted primarily by the beta subunits. The protein is ATP synthase subunit beta of Rickettsia conorii (strain ATCC VR-613 / Malish 7).